A 468-amino-acid chain; its full sequence is MDYLPLFARLNNRAVLLVGGGDIALRKARLLLDAGANLTVVAPSLHEELTELLVGHTYIPSRFTAAYLNDQMLVIAATDDEEVNAEVAAAADAANIWVNVVDDPDRSSFIFPSIIDRSPIMVAVSSGGKAPVLVRMLRERLEALLPKHLGALANLSGEWRNQIKQKLGDITSRRRFWEKAFASPQLATLLETEQHDSAEQWMADQLQADDYAGGEIVLVGAGPGDAGLLTLKGLQQIQQAEVVLYDQLVSPEVLNLVRRDAERISVGKKAGHHSVPQHEINELLLSHARAGKRVVRLKGGDPFMFGRGAEELQAARAEGIPFSVVPGITAAAGATAYAGIPLTHRDSAQSAVFITGHCKQDGEEPDWAALAASNQTLVIYMGLIGSPAITERLIAHGRRPETPVALIERGTTVRQRVLRGTLQELPELAKDAHSPSLIVIGEVAALADTLSWFGGDTASGKEHLINLA.

Positions 1 to 202 are precorrin-2 dehydrogenase /sirohydrochlorin ferrochelatase; that stretch reads MDYLPLFARL…EQHDSAEQWM (202 aa). NAD(+) is bound by residues 22 to 23 and 43 to 44; these read DI and PS. Ser126 is subject to Phosphoserine. The segment at 214–468 is uroporphyrinogen-III C-methyltransferase; it reads GEIVLVGAGP…SGKEHLINLA (255 aa). Position 223 (Pro223) interacts with S-adenosyl-L-methionine. The active-site Proton acceptor is Asp246. Catalysis depends on Lys268, which acts as the Proton donor. S-adenosyl-L-methionine contacts are provided by residues 299 to 301, 329 to 330, Met381, and Gly410; these read GGD and TA.

In the N-terminal section; belongs to the precorrin-2 dehydrogenase / sirohydrochlorin ferrochelatase family. The protein in the C-terminal section; belongs to the precorrin methyltransferase family.

The catalysed reaction is uroporphyrinogen III + 2 S-adenosyl-L-methionine = precorrin-2 + 2 S-adenosyl-L-homocysteine + H(+). It catalyses the reaction precorrin-2 + NAD(+) = sirohydrochlorin + NADH + 2 H(+). The enzyme catalyses siroheme + 2 H(+) = sirohydrochlorin + Fe(2+). Its pathway is cofactor biosynthesis; adenosylcobalamin biosynthesis; precorrin-2 from uroporphyrinogen III: step 1/1. It functions in the pathway cofactor biosynthesis; adenosylcobalamin biosynthesis; sirohydrochlorin from precorrin-2: step 1/1. It participates in porphyrin-containing compound metabolism; siroheme biosynthesis; precorrin-2 from uroporphyrinogen III: step 1/1. The protein operates within porphyrin-containing compound metabolism; siroheme biosynthesis; siroheme from sirohydrochlorin: step 1/1. Its pathway is porphyrin-containing compound metabolism; siroheme biosynthesis; sirohydrochlorin from precorrin-2: step 1/1. In terms of biological role, multifunctional enzyme that catalyzes the SAM-dependent methylations of uroporphyrinogen III at position C-2 and C-7 to form precorrin-2 via precorrin-1. Then it catalyzes the NAD-dependent ring dehydrogenation of precorrin-2 to yield sirohydrochlorin. Finally, it catalyzes the ferrochelation of sirohydrochlorin to yield siroheme. The chain is Siroheme synthase from Tolumonas auensis (strain DSM 9187 / NBRC 110442 / TA 4).